Here is a 518-residue protein sequence, read N- to C-terminus: Motile sperm domain-containing protein 2 (518 aa).

Topologically, residues 1–496 are cytoplasmic; it reads MAENHAQNKA…QVQRCIWFQQ (496 aa). Residues 82–239 form the CRAL-TRIO domain; the sequence is ESSIPRWLLE…HMGGTDPFKY (158 aa). The segment at 252 to 308 is disordered; the sequence is PLCENGPITSEDETSSKEDIESDGKETLETISNEEQTPLLKKINPTESTSKAEENEK. Positions 265-279 are enriched in basic and acidic residues; it reads TSSKEDIESDGKETL. The 119-residue stretch at 327–445 folds into the MSP domain; it reads LLHISPAEEL…MEHRLRCHTV (119 aa). The tract at residues 365-366 is required for FFAT motif binding and phosphorylated FFAT motif binding; it reads RT. The chain crosses the membrane as a helical; Anchor for type IV membrane protein span at residues 497 to 518; the sequence is LLLSLTMLLLAFVTSFFYLLYS.

Homooligomer. Interacts (via MSP domain) with STARD3NL (via FFAT motif), RMDN3 (via FFAT motif), OSBPL1A (via FFAT motif) and CERT1 (via FFAT motif). Interacts (via MSP domain) with STARD3 (via phosphorylated FFAT motif); this interaction depends on the critical phosphorylation of STARD3 on 'Ser-209'. Interacts with RB1CC1 (via phosphorylated FFAT motif), MIGA2 (via phosphorylated FFAT motif) and OSBPL1A (via FFAT motif). As to expression, highly expressed in CD14(+) monocytes, and at lower levels in neutrophils. Does not show significant expression in B-cells or T-cells.

The protein localises to the endoplasmic reticulum membrane. Functionally, endoplasmic reticulum-anchored protein that mediates the formation of contact sites between the endoplasmic (ER) and endosomes, mitochondria or Golgi through interaction with conventional- and phosphorylated-FFAT-containing organelle-bound proteins. In addition, forms endoplasmic reticulum (ER)-lipid droplets (LDs) contacts through a direct protein-membrane interaction and participates in LDs homeostasis. The attachment mechanism involves an amphipathic helix that has an affinity for lipid packing defects present at the surface of LDs. Promotes migration of primary monocytes and neutrophils, in response to various chemokines. The sequence is that of Motile sperm domain-containing protein 2 from Homo sapiens (Human).